The chain runs to 136 residues: Purkinje cell protein 2 homolog (136 aa).

Disordered stretches follow at residues 1–64 and 86–136; these read MMDQ…PEMD and SSLP…TQAP. The GoLoco 1 domain occupies 23 to 45; the sequence is QEGFFNLLSHVQGDRMEGQRCSL. The segment covering 49-59 has biased composition (polar residues); the sequence is PGQTTKSQSDP. The region spanning 63 to 85 is the GoLoco 2 domain; sequence MDSLMDMLASTQGRRMDDQRVTV. The span at 107-117 shows a compositional bias: polar residues; sequence LSPQPLLTPQD. The residue at position 127 (serine 127) is a Phosphoserine.

In terms of biological role, may function as a cell-type specific modulator for G protein-mediated cell signaling. In Homo sapiens (Human), this protein is Purkinje cell protein 2 homolog (PCP2).